The primary structure comprises 661 residues: Acetyl-coenzyme A synthetase (661 aa).

Residues 197–200 and threonine 320 contribute to the CoA site; that span reads RGGK. ATP contacts are provided by residues 396-398, 420-425, aspartate 511, and arginine 526; these read GEP and DTWWQT. Position 534 (serine 534) interacts with CoA. Arginine 537 contributes to the ATP binding site. Mg(2+)-binding residues include valine 548 and valine 553. The residue at position 620 (lysine 620) is an N6-acetyllysine.

It belongs to the ATP-dependent AMP-binding enzyme family. Requires Mg(2+) as cofactor. Post-translationally, acetylated. Deacetylation by the SIR2-homolog deacetylase activates the enzyme.

It catalyses the reaction acetate + ATP + CoA = acetyl-CoA + AMP + diphosphate. In terms of biological role, catalyzes the conversion of acetate into acetyl-CoA (AcCoA), an essential intermediate at the junction of anabolic and catabolic pathways. AcsA undergoes a two-step reaction. In the first half reaction, AcsA combines acetate with ATP to form acetyl-adenylate (AcAMP) intermediate. In the second half reaction, it can then transfer the acetyl group from AcAMP to the sulfhydryl group of CoA, forming the product AcCoA. In Leptospira interrogans serogroup Icterohaemorrhagiae serovar copenhageni (strain Fiocruz L1-130), this protein is Acetyl-coenzyme A synthetase.